Consider the following 157-residue polypeptide: Protein-export protein SecB (157 aa).

This sequence belongs to the SecB family. As to quaternary structure, homotetramer, a dimer of dimers. One homotetramer interacts with 1 SecA dimer.

The protein localises to the cytoplasm. One of the proteins required for the normal export of preproteins out of the cell cytoplasm. It is a molecular chaperone that binds to a subset of precursor proteins, maintaining them in a translocation-competent state. It also specifically binds to its receptor SecA. In Proteus mirabilis (strain HI4320), this protein is Protein-export protein SecB.